The primary structure comprises 378 residues: Cytochrome b (378 aa).

The next 4 membrane-spanning stretches (helical) occupy residues 34-54 (FGSL…FLAM), 78-99 (WLLR…YLHV), 114-134 (WLIG…GYVL), and 179-199 (FFTF…IHLL). Residues His-84 and His-98 each contribute to the heme b site. The heme b site is built by His-183 and His-197. His-202 serves as a coordination point for a ubiquinone. Transmembrane regions (helical) follow at residues 227–247 (FKDI…VLIS), 289–309 (LGGV…PFYN), 321–341 (INQV…WIGA), and 348–368 (YVLI…VNPL).

Belongs to the cytochrome b family. In terms of assembly, the main subunits of complex b-c1 are: cytochrome b, cytochrome c1 and the Rieske protein. Heme b is required as a cofactor.

The protein resides in the mitochondrion inner membrane. Its function is as follows. Component of the ubiquinol-cytochrome c reductase complex (complex III or cytochrome b-c1 complex) that is part of the mitochondrial respiratory chain. The b-c1 complex mediates electron transfer from ubiquinol to cytochrome c. Contributes to the generation of a proton gradient across the mitochondrial membrane that is then used for ATP synthesis. The protein is Cytochrome b (mt:Cyt-b) of Drosophila mauritiana (Fruit fly).